A 366-amino-acid polypeptide reads, in one-letter code: Phospho-N-acetylmuramoyl-pentapeptide-transferase (366 aa).

10 helical membrane passes run 3-23 (QIII…PVLI), 52-72 (MGGI…GIVG), 80-100 (LTAS…LGFA), 120-140 (LIGQ…FPNA), 161-181 (LAIG…YILI), 197-217 (LAAG…FWQF), 238-258 (LAIL…WNAA), 262-282 (IFMG…LSVA), 287-307 (LLMI…VIQV), and 341-361 (FWLI…GEWL).

Belongs to the glycosyltransferase 4 family. MraY subfamily. Mg(2+) is required as a cofactor.

Its subcellular location is the cell membrane. The enzyme catalyses UDP-N-acetyl-alpha-D-muramoyl-L-alanyl-gamma-D-glutamyl-meso-2,6-diaminopimeloyl-D-alanyl-D-alanine + di-trans,octa-cis-undecaprenyl phosphate = di-trans,octa-cis-undecaprenyl diphospho-N-acetyl-alpha-D-muramoyl-L-alanyl-D-glutamyl-meso-2,6-diaminopimeloyl-D-alanyl-D-alanine + UMP. Its pathway is cell wall biogenesis; peptidoglycan biosynthesis. Functionally, catalyzes the initial step of the lipid cycle reactions in the biosynthesis of the cell wall peptidoglycan: transfers peptidoglycan precursor phospho-MurNAc-pentapeptide from UDP-MurNAc-pentapeptide onto the lipid carrier undecaprenyl phosphate, yielding undecaprenyl-pyrophosphoryl-MurNAc-pentapeptide, known as lipid I. This is Phospho-N-acetylmuramoyl-pentapeptide-transferase from Corynebacterium diphtheriae (strain ATCC 700971 / NCTC 13129 / Biotype gravis).